The following is a 646-amino-acid chain: Pentatricopeptide repeat-containing protein At5g48910 (646 aa).

The segment at 1-24 is disordered; that stretch reads MNPTQTLFSPGGNSPASSPASHPS. The segment covering 9–24 has biased composition (low complexity); sequence SPGGNSPASSPASHPS. PPR repeat units lie at residues 54-88, 89-126, 127-161, 162-197, 207-237, 238-272, 273-307, 308-338, 339-373, 374-409, and 410-440; these read DTLAAAEILRFCATSDLHHRDLDYAHKIFNQMPQR, NCFSWNTIIRGFSESDEDKALIAITLFYEMMSDEFVEP, NRFTFPSVLKACAKTGKIQEGKQIHGLALKYGFGG, DEFVMSNLVRMYVMCGFMKDARVLFYKNIIEKDMVV, EIVLWNVMIDGYMRLGDCKAARMLFDKMRQR, SVVSWNTMISGYSLNGFFKDAVEVFREMKKGDIRP, NYVTLVSVLPAISRLGSLELGEWLHLYAEDSGIRI, DDVLGSALIDMYSKCGIIEKAIHVFERLPRE, NVITWSAMINGFAIHGQAGDAIDCFCKMRQAGVRP, SDVAYINLLTACSHGGLVEEGRRYFSQMVSVDGLEP, and RIEHYGCMVDLLGRSGLLDEAEEFILNMPIK. Residues 445–520 form a type E motif region; it reads IWKALLGACR…DPGCSLIDID (76 aa). The interval 521–551 is type E(+) motif; it reads GVLHEFVVEDDSHPKAKEINSMLVEISDKLR. The segment at 552–646 is type DYW motif; that stretch reads LAGYRPITTQ…DGSCSCMDYW (95 aa).

This sequence belongs to the PPR family. PCMP-H subfamily.

This is Pentatricopeptide repeat-containing protein At5g48910 (PCMP-H38) from Arabidopsis thaliana (Mouse-ear cress).